A 924-amino-acid chain; its full sequence is Isoleucine--tRNA ligase (924 aa).

Residues 57–67 (PYANGDIHMGH) carry the 'HIGH' region motif. L-isoleucyl-5'-AMP is bound at residue Glu552. Positions 593–597 (KMSKS) match the 'KMSKS' region motif. Lys596 provides a ligand contact to ATP. The Zn(2+) site is built by Cys891, Cys894, Cys911, and Cys914.

This sequence belongs to the class-I aminoacyl-tRNA synthetase family. IleS type 1 subfamily. Monomer. It depends on Zn(2+) as a cofactor.

It localises to the cytoplasm. It carries out the reaction tRNA(Ile) + L-isoleucine + ATP = L-isoleucyl-tRNA(Ile) + AMP + diphosphate. Functionally, catalyzes the attachment of isoleucine to tRNA(Ile). As IleRS can inadvertently accommodate and process structurally similar amino acids such as valine, to avoid such errors it has two additional distinct tRNA(Ile)-dependent editing activities. One activity is designated as 'pretransfer' editing and involves the hydrolysis of activated Val-AMP. The other activity is designated 'posttransfer' editing and involves deacylation of mischarged Val-tRNA(Ile). In Geobacillus kaustophilus (strain HTA426), this protein is Isoleucine--tRNA ligase.